The following is a 616-amino-acid chain: Chaperone protein HscA (616 aa).

This sequence belongs to the heat shock protein 70 family.

Its function is as follows. Chaperone involved in the maturation of iron-sulfur cluster-containing proteins. Has a low intrinsic ATPase activity which is markedly stimulated by HscB. Involved in the maturation of IscU. This chain is Chaperone protein HscA, found in Proteus mirabilis (strain HI4320).